The following is a 295-amino-acid chain: Aspartate carbamoyltransferase catalytic subunit (295 aa).

Carbamoyl phosphate contacts are provided by Arg-49 and Thr-50. Residue Lys-77 participates in L-aspartate binding. Positions 99, 127, and 130 each coordinate carbamoyl phosphate. L-aspartate contacts are provided by Arg-161 and Arg-212. Carbamoyl phosphate-binding residues include Gly-251 and Pro-252.

It belongs to the aspartate/ornithine carbamoyltransferase superfamily. ATCase family. In terms of assembly, heterododecamer (2C3:3R2) of six catalytic PyrB chains organized as two trimers (C3), and six regulatory PyrI chains organized as three dimers (R2).

The catalysed reaction is carbamoyl phosphate + L-aspartate = N-carbamoyl-L-aspartate + phosphate + H(+). Its pathway is pyrimidine metabolism; UMP biosynthesis via de novo pathway; (S)-dihydroorotate from bicarbonate: step 2/3. Catalyzes the condensation of carbamoyl phosphate and aspartate to form carbamoyl aspartate and inorganic phosphate, the committed step in the de novo pyrimidine nucleotide biosynthesis pathway. The polypeptide is Aspartate carbamoyltransferase catalytic subunit (Campylobacter jejuni subsp. jejuni serotype O:2 (strain ATCC 700819 / NCTC 11168)).